We begin with the raw amino-acid sequence, 112 residues long: Phosphoribosyl-AMP cyclohydrolase (112 aa).

Asp-76 contacts Mg(2+). Residue Cys-77 coordinates Zn(2+). Positions 78 and 80 each coordinate Mg(2+). 2 residues coordinate Zn(2+): Cys-93 and Cys-100.

The protein belongs to the PRA-CH family. Homodimer. The cofactor is Mg(2+). Zn(2+) serves as cofactor.

The protein resides in the cytoplasm. The catalysed reaction is 1-(5-phospho-beta-D-ribosyl)-5'-AMP + H2O = 1-(5-phospho-beta-D-ribosyl)-5-[(5-phospho-beta-D-ribosylamino)methylideneamino]imidazole-4-carboxamide. It functions in the pathway amino-acid biosynthesis; L-histidine biosynthesis; L-histidine from 5-phospho-alpha-D-ribose 1-diphosphate: step 3/9. In terms of biological role, catalyzes the hydrolysis of the adenine ring of phosphoribosyl-AMP. This chain is Phosphoribosyl-AMP cyclohydrolase, found in Streptococcus thermophilus (strain ATCC BAA-491 / LMD-9).